Here is a 158-residue protein sequence, read N- to C-terminus: Small ribosomal subunit protein uS19 (158 aa).

The protein belongs to the universal ribosomal protein uS19 family.

Its function is as follows. Protein S19 forms a complex with S13 that binds strongly to the 16S ribosomal RNA. This Pyrobaculum calidifontis (strain DSM 21063 / JCM 11548 / VA1) protein is Small ribosomal subunit protein uS19.